The sequence spans 216 residues: Peptide methionine sulfoxide reductase MsrA (216 aa).

C54 is an active-site residue.

It belongs to the MsrA Met sulfoxide reductase family.

It carries out the reaction L-methionyl-[protein] + [thioredoxin]-disulfide + H2O = L-methionyl-(S)-S-oxide-[protein] + [thioredoxin]-dithiol. The enzyme catalyses [thioredoxin]-disulfide + L-methionine + H2O = L-methionine (S)-S-oxide + [thioredoxin]-dithiol. In terms of biological role, has an important function as a repair enzyme for proteins that have been inactivated by oxidation. Catalyzes the reversible oxidation-reduction of methionine sulfoxide in proteins to methionine. The sequence is that of Peptide methionine sulfoxide reductase MsrA from Xylella fastidiosa (strain Temecula1 / ATCC 700964).